Consider the following 141-residue polypeptide: Putative pre-16S rRNA nuclease (141 aa).

The protein belongs to the YqgF nuclease family.

It localises to the cytoplasm. In terms of biological role, could be a nuclease involved in processing of the 5'-end of pre-16S rRNA. The polypeptide is Putative pre-16S rRNA nuclease (Pseudomonas putida (strain ATCC 47054 / DSM 6125 / CFBP 8728 / NCIMB 11950 / KT2440)).